The primary structure comprises 237 residues: Phosphoribosylaminoimidazole-succinocarboxamide synthase (237 aa).

This sequence belongs to the SAICAR synthetase family.

The enzyme catalyses 5-amino-1-(5-phospho-D-ribosyl)imidazole-4-carboxylate + L-aspartate + ATP = (2S)-2-[5-amino-1-(5-phospho-beta-D-ribosyl)imidazole-4-carboxamido]succinate + ADP + phosphate + 2 H(+). The protein operates within purine metabolism; IMP biosynthesis via de novo pathway; 5-amino-1-(5-phospho-D-ribosyl)imidazole-4-carboxamide from 5-amino-1-(5-phospho-D-ribosyl)imidazole-4-carboxylate: step 1/2. This is Phosphoribosylaminoimidazole-succinocarboxamide synthase from Salmonella arizonae (strain ATCC BAA-731 / CDC346-86 / RSK2980).